Reading from the N-terminus, the 435-residue chain is Serine hydroxymethyltransferase 2 (435 aa).

Residues Leu-135 and 139 to 141 each bind (6S)-5,6,7,8-tetrahydrofolate; that span reads GHL. Lys-244 is subject to N6-(pyridoxal phosphate)lysine. Glu-260 provides a ligand contact to (6S)-5,6,7,8-tetrahydrofolate.

This sequence belongs to the SHMT family. In terms of assembly, homodimer. Pyridoxal 5'-phosphate serves as cofactor.

Its subcellular location is the cytoplasm. The enzyme catalyses (6R)-5,10-methylene-5,6,7,8-tetrahydrofolate + glycine + H2O = (6S)-5,6,7,8-tetrahydrofolate + L-serine. It participates in one-carbon metabolism; tetrahydrofolate interconversion. The protein operates within amino-acid biosynthesis; glycine biosynthesis; glycine from L-serine: step 1/1. Its function is as follows. Catalyzes the reversible interconversion of serine and glycine with tetrahydrofolate (THF) serving as the one-carbon carrier. This reaction serves as the major source of one-carbon groups required for the biosynthesis of purines, thymidylate, methionine, and other important biomolecules. Also exhibits THF-independent aldolase activity toward beta-hydroxyamino acids, producing glycine and aldehydes, via a retro-aldol mechanism. This chain is Serine hydroxymethyltransferase 2, found in Vibrio cholerae serotype O1 (strain ATCC 39315 / El Tor Inaba N16961).